Consider the following 291-residue polypeptide: Nucleotide-binding protein LMHCC_0126 (291 aa).

13–20 serves as a coordination point for ATP; it reads GMSGAGKT. Residue 63–66 participates in GTP binding; it reads DLRG.

The protein belongs to the RapZ-like family.

Functionally, displays ATPase and GTPase activities. The polypeptide is Nucleotide-binding protein LMHCC_0126 (Listeria monocytogenes serotype 4a (strain HCC23)).